We begin with the raw amino-acid sequence, 391 residues long: Rhizopuspepsin-3 (391 aa).

Positions 1-21 (MKFTLISSCVTLALMTLSIEA) are cleaved as a signal peptide. A propeptide spans 22–68 (APSGKKVNIPLTKNKDYKPNAKNAIQKAIAKYHRHRSVSSSNSTSTD) (activation peptide). Residues 84–388 (YYGEVTVGTP…NPEVPHVQIA (305 aa)) enclose the Peptidase A1 domain. Asp102 is an active-site residue. The cysteines at positions 115 and 118 are disulfide-linked. The active site involves Asp285. A disulfide bridge connects residues Cys319 and Cys352.

The protein belongs to the peptidase A1 family.

It carries out the reaction Hydrolysis of proteins with broad specificity similar to that of pepsin A, preferring hydrophobic residues at P1 and P1'. Clots milk and activates trypsinogen. Does not cleave 4-Gln-|-His-5, but does cleave 10-His-|-Leu-11 and 12-Val-|-Glu-13 in B chain of insulin.. The chain is Rhizopuspepsin-3 from Rhizopus niveus.